The primary structure comprises 512 residues: Anaerobic nitric oxide reductase transcription regulator NorR (512 aa).

A Sigma-54 factor interaction domain is found at 190–419 (MIGESLAMQE…LEHVISRAAV (230 aa)). ATP is bound by residues 218-225 (GETGVGKE) and 281-290 (ADNGTLFLDE). A DNA-binding region (H-T-H motif) is located at residues 487–506 (WAATARALQLDTGNLHRLAK).

It functions in the pathway nitrogen metabolism; nitric oxide reduction. Its function is as follows. Required for the expression of anaerobic nitric oxide (NO) reductase, acts as a transcriptional activator for at least the norVW operon. Activation also requires sigma-54. In Aliivibrio fischeri (strain ATCC 700601 / ES114) (Vibrio fischeri), this protein is Anaerobic nitric oxide reductase transcription regulator NorR.